Consider the following 55-residue polypeptide: Ferredoxin (55 aa).

4Fe-4S ferredoxin-type domains follow at residues Tyr2–Asp27 and Ala28–Gly55. [4Fe-4S] cluster is bound by residues Cys8, Cys11, Cys14, Cys18, Cys37, Cys40, Cys43, and Cys47.

Requires [4Fe-4S] cluster as cofactor.

In terms of biological role, ferredoxins are iron-sulfur proteins that transfer electrons in a wide variety of metabolic reactions. In Clostridium sp. (strain M-E), this protein is Ferredoxin.